Consider the following 510-residue polypeptide: GTPase Der (510 aa).

2 EngA-type G domains span residues Pro3–Leu166 and Ile220–Thr393. Residues Gly9 to Ser16, Asp56 to Ile60, Asn118 to Asp121, Gly226 to Ser233, Asp273 to Val277, and Asn338 to Asp341 contribute to the GTP site. A KH-like domain is found at Gln394–Asn478.

Belongs to the TRAFAC class TrmE-Era-EngA-EngB-Septin-like GTPase superfamily. EngA (Der) GTPase family. As to quaternary structure, associates with the 50S ribosomal subunit.

GTPase that plays an essential role in the late steps of ribosome biogenesis. This is GTPase Der from Haemophilus ducreyi (strain 35000HP / ATCC 700724).